The following is a 205-amino-acid chain: Imidazoleglycerol-phosphate dehydratase (205 aa).

The protein belongs to the imidazoleglycerol-phosphate dehydratase family.

The catalysed reaction is D-erythro-1-(imidazol-4-yl)glycerol 3-phosphate = 3-(imidazol-4-yl)-2-oxopropyl phosphate + H2O. Its pathway is amino-acid biosynthesis; L-histidine biosynthesis; L-histidine from 5-phospho-alpha-D-ribose 1-diphosphate: step 6/9. The polypeptide is Imidazoleglycerol-phosphate dehydratase (HIS3) (Phaffia rhodozyma (Yeast)).